The sequence spans 424 residues: Glutamyl-tRNA reductase (424 aa).

Residues 53–56, S111, 116–118, and Q122 each bind substrate; these read TCNR and EPQ. Catalysis depends on C54, which acts as the Nucleophile. 191–196 contributes to the NADP(+) binding site; sequence GAGEMI.

Belongs to the glutamyl-tRNA reductase family. In terms of assembly, homodimer.

It catalyses the reaction (S)-4-amino-5-oxopentanoate + tRNA(Glu) + NADP(+) = L-glutamyl-tRNA(Glu) + NADPH + H(+). It functions in the pathway porphyrin-containing compound metabolism; protoporphyrin-IX biosynthesis; 5-aminolevulinate from L-glutamyl-tRNA(Glu): step 1/2. Functionally, catalyzes the NADPH-dependent reduction of glutamyl-tRNA(Glu) to glutamate 1-semialdehyde (GSA). This chain is Glutamyl-tRNA reductase, found in Bordetella bronchiseptica (strain ATCC BAA-588 / NCTC 13252 / RB50) (Alcaligenes bronchisepticus).